The following is a 99-amino-acid chain: Aspartyl/glutamyl-tRNA(Asn/Gln) amidotransferase subunit C (99 aa).

This sequence belongs to the GatC family. In terms of assembly, heterotrimer of A, B and C subunits.

The enzyme catalyses L-glutamyl-tRNA(Gln) + L-glutamine + ATP + H2O = L-glutaminyl-tRNA(Gln) + L-glutamate + ADP + phosphate + H(+). The catalysed reaction is L-aspartyl-tRNA(Asn) + L-glutamine + ATP + H2O = L-asparaginyl-tRNA(Asn) + L-glutamate + ADP + phosphate + 2 H(+). Its function is as follows. Allows the formation of correctly charged Asn-tRNA(Asn) or Gln-tRNA(Gln) through the transamidation of misacylated Asp-tRNA(Asn) or Glu-tRNA(Gln) in organisms which lack either or both of asparaginyl-tRNA or glutaminyl-tRNA synthetases. The reaction takes place in the presence of glutamine and ATP through an activated phospho-Asp-tRNA(Asn) or phospho-Glu-tRNA(Gln). The sequence is that of Aspartyl/glutamyl-tRNA(Asn/Gln) amidotransferase subunit C from Orientia tsutsugamushi (strain Ikeda) (Rickettsia tsutsugamushi).